We begin with the raw amino-acid sequence, 65 residues long: Large ribosomal subunit protein bL35 (65 aa).

Belongs to the bacterial ribosomal protein bL35 family.

This Clostridium botulinum (strain Loch Maree / Type A3) protein is Large ribosomal subunit protein bL35.